Consider the following 761-residue polypeptide: MRYNQLSYIPTSLETAVAELQALGFAVQQEQAPKESFAIFLRKLFFHFQDTDYPLSHMIATKELDLLSFLASDEALTKEVFDLVALQVLGFIPAVDFTDTQDFIQKIGFPIVFDSQQLLLNLHQLLATRQKSGVTLIDSLVSQGLLPMDNCYHYFNGKALATFDTTSLIREVVYVEAPLDTDQDGQLDLIKVNIIRPKASTAIPSMMTASPYHQGINETANDKKLHRMEGELSPKAPRRITVEPTDFQPLATKPSRLPVNECQETFSHISSYTLNDYFLARGFANLYVSGVGTAGSTGFMTSGDYAQIESFKAVIDWLNGRATAYTSHKRDYQIKADWSNGLVATTGKSYLGTMSTGLATTGVDGLAVIIAEAAISSWYDYYRENGLVCSPGGYPGEDLDVLTELTYSRNLLPGDYLRHNDHYQELLSQQSQALDRQSGDYNQFWHDRNYLPQADRIKCEVVYTHGLQDWNVKPRQVYNIFNALPDSLGKHLFLHHGEHVYMHNWQSIDFREAMNALLCQKMLGQNNGFTLPTIIWQDNQKEQTWKELTAFGGHSKRQIALGEDHVLIDNHYGEEDFKRYGKDFRAFKAELFEGKANQAVIDILLEEDLPINGQACLKLKLKSSENKGILSAQLLDYGKKKRFGDLPAILELDSIDNGQQFAREALKELPFKDSPYRVVTKGVLNLQHRSGLLTIEDIPNDQWISITFHLQPTIYHMAKGDTLRVVLYTTDFEHTIRDNSNYALTLDLEQSYLLIPTDEEE.

Active-site charge relay system residues include serine 349, aspartate 469, and histidine 499.

This sequence belongs to the peptidase S15 family. As to quaternary structure, homodimer.

The protein resides in the cytoplasm. The catalysed reaction is Hydrolyzes Xaa-Pro-|- bonds to release unblocked, N-terminal dipeptides from substrates including Ala-Pro-|-p-nitroanilide and (sequentially) Tyr-Pro-|-Phe-Pro-|-Gly-Pro-|-Ile.. In terms of biological role, removes N-terminal dipeptides sequentially from polypeptides having unsubstituted N-termini provided that the penultimate residue is proline. This is Xaa-Pro dipeptidyl-peptidase from Streptococcus equi subsp. zooepidemicus (strain H70).